The primary structure comprises 168 residues: Protein OPG162 (168 aa).

Over 1-14 (MKSLNRQTVSRFKK) the chain is Intravirion. The helical transmembrane segment at 15 to 37 (LSVPAAIMMILSTIISGIGTFLH) threads the bilayer. The Virion surface portion of the chain corresponds to 38-168 (YKEELMPSAC…SVLCVKRFYK (131 aa)). Positions 54–163 (YDKHCYLDTN…CKSTQSVLCV (110 aa)) constitute a C-type lectin domain. Intrachain disulfides connect Cys-75–Cys-162 and Cys-141–Cys-154. The N-linked (GlcNAc...) asparagine; by host glycan is linked to Asn-133.

Belongs to the orthopoxvirus OPG162 protein family. As to quaternary structure, interacts with protein OPG161. Interacts with protein OPG164. Interacts with protein OPG190.

The protein resides in the virion membrane. It is found in the host Golgi apparatus. In terms of biological role, forms a complex with OPG162 and OPG190 to coordinate the incorporation of OPG164 into wrapped enveloped virion (EV) membranes and, subsequently, the production of actin tails. Therefore plays an essential role in efficient cell-to-cell spread of viral particles. The polypeptide is Protein OPG162 (OPG162) (Variola virus (isolate Human/India/Ind3/1967) (VARV)).